A 538-amino-acid polypeptide reads, in one-letter code: Translation initiation factor IF-3, chloroplastic (538 aa).

A chloroplast-targeting transit peptide spans M1 to F140. The tract at residues S141–L290 is head. 2 disordered regions span residues A146–K165 and R188–S210. The interval S291–E474 is IF-3 like. The segment at A484–S538 is disordered. The span at E493–E530 shows a compositional bias: acidic residues.

Belongs to the IF-3 family. Monomer. The N-terminus is blocked.

It is found in the plastid. The protein resides in the chloroplast. Its function is as follows. Involved in chloroplast protein synthesis. It enhances the poly(A,U,G)-dependent binding of the initiator tRNA to chloroplast 30S subunits. The protein is Translation initiation factor IF-3, chloroplastic of Euglena gracilis.